The primary structure comprises 299 residues: Protein bem46 (299 aa).

A helical transmembrane segment spans residues 15–32 (YSGMASLAVTLIALGFLY).

It belongs to the serine esterase family.

The protein localises to the membrane. Its function is as follows. Suppressor of bem1/bud5. In Schizosaccharomyces pombe (strain 972 / ATCC 24843) (Fission yeast), this protein is Protein bem46 (bem46).